The sequence spans 150 residues: Transcriptional repressor NrdR (150 aa).

Residues 3-34 (CPFCGYEDTFVIDTREIEDQKVIRRRRECPNC) fold into a zinc finger. An ATP-cone domain is found at 49 to 139 (IMVIKKDGRR…VYQEFSSLEE (91 aa)).

The protein belongs to the NrdR family. Requires Zn(2+) as cofactor.

Functionally, negatively regulates transcription of bacterial ribonucleotide reductase nrd genes and operons by binding to NrdR-boxes. This is Transcriptional repressor NrdR from Dictyoglomus turgidum (strain DSM 6724 / Z-1310).